A 1400-amino-acid chain; its full sequence is DNA-directed RNA polymerase subunit beta' (1400 aa).

Residues C70, C72, C85, and C88 each coordinate Zn(2+). Positions 460, 462, and 464 each coordinate Mg(2+). Zn(2+) is bound by residues C814, C888, C895, and C898.

It belongs to the RNA polymerase beta' chain family. As to quaternary structure, the RNAP catalytic core consists of 2 alpha, 1 beta, 1 beta' and 1 omega subunit. When a sigma factor is associated with the core the holoenzyme is formed, which can initiate transcription. Mg(2+) serves as cofactor. Zn(2+) is required as a cofactor.

It catalyses the reaction RNA(n) + a ribonucleoside 5'-triphosphate = RNA(n+1) + diphosphate. Its function is as follows. DNA-dependent RNA polymerase catalyzes the transcription of DNA into RNA using the four ribonucleoside triphosphates as substrates. The chain is DNA-directed RNA polymerase subunit beta' from Vibrio vulnificus (strain CMCP6).